The following is a 347-amino-acid chain: Selenide, water dikinase (347 aa).

The active site involves C17. Residues K20 and 48–50 contribute to the ATP site; that span reads TRD. D51 is a binding site for Mg(2+). Residues D68, D91, and 139–141 contribute to the ATP site; that span reads GHS. D91 lines the Mg(2+) pocket. D227 contacts Mg(2+).

The protein belongs to the selenophosphate synthase 1 family. Class I subfamily. In terms of assembly, homodimer. Mg(2+) is required as a cofactor.

It carries out the reaction hydrogenselenide + ATP + H2O = selenophosphate + AMP + phosphate + 2 H(+). Functionally, synthesizes selenophosphate from selenide and ATP. In Enterobacter sp. (strain 638), this protein is Selenide, water dikinase.